The chain runs to 592 residues: Aspartate--tRNA(Asp/Asn) ligase (592 aa).

Glu175 provides a ligand contact to L-aspartate. The interval 199 to 202 (QLFK) is aspartate. Arg221 lines the L-aspartate pocket. Residues 221 to 223 (RDE) and Gln230 each bind ATP. Residue His450 participates in L-aspartate binding. Glu483 contacts ATP. Arg490 serves as a coordination point for L-aspartate. 535–538 (GLDR) serves as a coordination point for ATP.

It belongs to the class-II aminoacyl-tRNA synthetase family. Type 1 subfamily. In terms of assembly, homodimer.

It is found in the cytoplasm. The enzyme catalyses tRNA(Asx) + L-aspartate + ATP = L-aspartyl-tRNA(Asx) + AMP + diphosphate. Aspartyl-tRNA synthetase with relaxed tRNA specificity since it is able to aspartylate not only its cognate tRNA(Asp) but also tRNA(Asn). Reaction proceeds in two steps: L-aspartate is first activated by ATP to form Asp-AMP and then transferred to the acceptor end of tRNA(Asp/Asn). The sequence is that of Aspartate--tRNA(Asp/Asn) ligase from Acinetobacter baumannii (strain AB307-0294).